The primary structure comprises 161 residues: SsrA-binding protein (161 aa).

Positions 137 to 161 are disordered; the sequence is HDKRTDSKEKDWNRDKARIMKSSLR. The span at 139 to 154 shows a compositional bias: basic and acidic residues; the sequence is KRTDSKEKDWNRDKAR.

Belongs to the SmpB family.

It localises to the cytoplasm. Required for rescue of stalled ribosomes mediated by trans-translation. Binds to transfer-messenger RNA (tmRNA), required for stable association of tmRNA with ribosomes. tmRNA and SmpB together mimic tRNA shape, replacing the anticodon stem-loop with SmpB. tmRNA is encoded by the ssrA gene; the 2 termini fold to resemble tRNA(Ala) and it encodes a 'tag peptide', a short internal open reading frame. During trans-translation Ala-aminoacylated tmRNA acts like a tRNA, entering the A-site of stalled ribosomes, displacing the stalled mRNA. The ribosome then switches to translate the ORF on the tmRNA; the nascent peptide is terminated with the 'tag peptide' encoded by the tmRNA and targeted for degradation. The ribosome is freed to recommence translation, which seems to be the essential function of trans-translation. The protein is SsrA-binding protein of Aliivibrio salmonicida (strain LFI1238) (Vibrio salmonicida (strain LFI1238)).